The chain runs to 156 residues: Putative F-box protein R637 (156 aa).

In terms of domain architecture, F-box spans 4–51 (HISSLLNEDCVRHIMCFLTDKEKGKFCLTCRDLLYLIKDVKFNDPVNK).

The protein is Putative F-box protein R637 of Acanthamoeba polyphaga mimivirus (APMV).